A 269-amino-acid polypeptide reads, in one-letter code: Hydroxyethylthiazole kinase (269 aa).

Residue Met41 participates in substrate binding. ATP-binding residues include Arg117 and Ser163. Residue Gly190 coordinates substrate.

It belongs to the Thz kinase family. It depends on Mg(2+) as a cofactor.

It catalyses the reaction 5-(2-hydroxyethyl)-4-methylthiazole + ATP = 4-methyl-5-(2-phosphooxyethyl)-thiazole + ADP + H(+). It functions in the pathway cofactor biosynthesis; thiamine diphosphate biosynthesis; 4-methyl-5-(2-phosphoethyl)-thiazole from 5-(2-hydroxyethyl)-4-methylthiazole: step 1/1. Its function is as follows. Catalyzes the phosphorylation of the hydroxyl group of 4-methyl-5-beta-hydroxyethylthiazole (THZ). The sequence is that of Hydroxyethylthiazole kinase from Latilactobacillus sakei subsp. sakei (strain 23K) (Lactobacillus sakei subsp. sakei).